The sequence spans 456 residues: Putative sodium-coupled neutral amino acid transporter 11 (456 aa).

Positions Met-1–Gln-25 are disordered. The helical transmembrane segment at Phe-58–Ile-78 threads the bilayer. A glycan (N-linked (GlcNAc...) asparagine) is linked at Asn-94. Transmembrane regions (helical) follow at residues Gly-98 to Ile-118, Val-143 to Ser-163, Leu-171 to Ala-191, Ala-206 to Ile-226, Met-252 to Phe-272, and Val-291 to Thr-313. Residue Asn-325 is glycosylated (N-linked (GlcNAc...) asparagine). Transmembrane regions (helical) follow at residues Val-329–Ile-349, Cys-351–Ile-371, and Ile-390–Ala-410.

This sequence belongs to the amino acid/polyamine transporter 2 family.

It localises to the membrane. Putative sodium-dependent amino acid/proton antiporter. The chain is Putative sodium-coupled neutral amino acid transporter 11 (SLC38A11) from Macaca fascicularis (Crab-eating macaque).